A 233-amino-acid chain; its full sequence is Small ribosomal subunit protein uS2 (233 aa).

Belongs to the universal ribosomal protein uS2 family.

This chain is Small ribosomal subunit protein uS2, found in Bacillus cereus (strain G9842).